A 277-amino-acid chain; its full sequence is Formamidopyrimidine-DNA glycosylase (277 aa).

Pro-2 functions as the Schiff-base intermediate with DNA in the catalytic mechanism. Glu-3 serves as the catalytic Proton donor. The active-site Proton donor; for beta-elimination activity is the Lys-58. DNA contacts are provided by His-97, Arg-116, and Arg-158. The segment at 243–277 adopts an FPG-type zinc-finger fold; the sequence is NVYGRAGAPCPRCGRSIRQRRIAQRSTWYCPGCQR. Catalysis depends on Arg-267, which acts as the Proton donor; for delta-elimination activity.

This sequence belongs to the FPG family. In terms of assembly, monomer. Requires Zn(2+) as cofactor.

The catalysed reaction is Hydrolysis of DNA containing ring-opened 7-methylguanine residues, releasing 2,6-diamino-4-hydroxy-5-(N-methyl)formamidopyrimidine.. It catalyses the reaction 2'-deoxyribonucleotide-(2'-deoxyribose 5'-phosphate)-2'-deoxyribonucleotide-DNA = a 3'-end 2'-deoxyribonucleotide-(2,3-dehydro-2,3-deoxyribose 5'-phosphate)-DNA + a 5'-end 5'-phospho-2'-deoxyribonucleoside-DNA + H(+). Its function is as follows. Involved in base excision repair of DNA damaged by oxidation or by mutagenic agents. Acts as a DNA glycosylase that recognizes and removes damaged bases. Has a preference for oxidized purines, such as 7,8-dihydro-8-oxoguanine (8-oxoG). Has AP (apurinic/apyrimidinic) lyase activity and introduces nicks in the DNA strand. Cleaves the DNA backbone by beta-delta elimination to generate a single-strand break at the site of the removed base with both 3'- and 5'-phosphates. The sequence is that of Formamidopyrimidine-DNA glycosylase from Alkalilimnicola ehrlichii (strain ATCC BAA-1101 / DSM 17681 / MLHE-1).